A 177-amino-acid chain; its full sequence is Large ribosomal subunit protein uL10 (177 aa).

This sequence belongs to the universal ribosomal protein uL10 family. In terms of assembly, part of the ribosomal stalk of the 50S ribosomal subunit. The N-terminus interacts with L11 and the large rRNA to form the base of the stalk. The C-terminus forms an elongated spine to which L12 dimers bind in a sequential fashion forming a multimeric L10(L12)X complex.

Functionally, forms part of the ribosomal stalk, playing a central role in the interaction of the ribosome with GTP-bound translation factors. The polypeptide is Large ribosomal subunit protein uL10 (Xanthomonas axonopodis pv. citri (strain 306)).